A 104-amino-acid polypeptide reads, in one-letter code: Large ribosomal subunit protein bL21 (104 aa).

The protein belongs to the bacterial ribosomal protein bL21 family. As to quaternary structure, part of the 50S ribosomal subunit. Contacts protein L20.

Functionally, this protein binds to 23S rRNA in the presence of protein L20. This is Large ribosomal subunit protein bL21 from Lactococcus lactis subsp. cremoris (strain MG1363).